Reading from the N-terminus, the 323-residue chain is tRNA dimethylallyltransferase (323 aa).

32-39 (GPTASGKS) is a binding site for ATP. 34 to 39 (TASGKS) provides a ligand contact to substrate. Residues 57-60 (DSMQ) are interaction with substrate tRNA.

Belongs to the IPP transferase family. Monomer. It depends on Mg(2+) as a cofactor.

It carries out the reaction adenosine(37) in tRNA + dimethylallyl diphosphate = N(6)-dimethylallyladenosine(37) in tRNA + diphosphate. Functionally, catalyzes the transfer of a dimethylallyl group onto the adenine at position 37 in tRNAs that read codons beginning with uridine, leading to the formation of N6-(dimethylallyl)adenosine (i(6)A). This is tRNA dimethylallyltransferase from Rhodopseudomonas palustris (strain BisB5).